The primary structure comprises 798 residues: Ubiquitin carboxyl-terminal hydrolase 10 (798 aa).

Ala-2 bears the N-acetylalanine mark. The interval 2-100 is interaction with p53/TP53; sequence ALHSPQYIFG…ILGCTASKIT (99 aa). The G3BP1-binding stretch occupies residues 6–21; that stretch reads PQYIFGDFSPDEFNQF. Position 24 is a phosphothreonine (Thr-24). Position 42 is a phosphothreonine; by ATM (Thr-42). Residue Thr-100 is modified to Phosphothreonine. Disordered stretches follow at residues 139–166, 194–257, and 307–337; these read GVSG…LKDG, AEFM…CFPA, and TESI…LPVS. Residues 205 to 219 show a composition bias toward polar residues; sequence TPRTCNSPQNSTDSV. Phosphoserine is present on residues Ser-211 and Ser-226. Over residues 307–316 the composition is skewed to basic and acidic residues; sequence TESIDLDPTK. Ser-321 is modified (phosphoserine). A compositionally biased stretch (polar residues) spans 328–337; sequence GSASGTLPVS. Ser-337 is modified (phosphoserine; by ATM). Phosphoserine occurs at positions 365 and 370. A USP domain is found at 415 to 795; sequence RGLINKGNWC…TAYLLYYRRV (381 aa). The Nucleophile role is filled by Cys-424. Ser-547 bears the Phosphoserine mark. Positions 551–562 are enriched in polar residues; it reads EKLTISNGPKNH. A disordered region spans residues 551–594; sequence EKLTISNGPKNHSVNEEEQEEQGEGSEDEWEQVGPRNKTSVTRQ. Phosphoserine occurs at positions 563 and 576. A compositionally biased stretch (acidic residues) spans 566–581; the sequence is EEEQEEQGEGSEDEWE. His-749 acts as the Proton acceptor in catalysis.

Belongs to the peptidase C19 family. USP10 subfamily. In terms of assembly, found in a deubiquitination complex with TANK, USP10 and ZC3H12A; this complex inhibits genotoxic stress- or interleukin-1-beta (IL1B)-mediated NF-kappa-B activation by promoting IKBKG or TRAF6 deubiquitination. Interacts with IKBKG; this interaction increases in response to DNA damage. Interacts with TANK; this interaction increases in response to DNA damage. Interacts with TRAF6; this interaction increases in response to DNA damage. Interacts with ZC3H12A; this interaction increases in response to DNA damage. Interacts with G3BP1 (via NTF2 domain) and G3BP2 (via NTF2 domain); inhibiting stress granule formation. Phosphorylated by ATM following DNA damage, leading to stabilization and translocation it to the nucleus. In terms of processing, ubiquitinated. Deubiquitinated by USP13. As to expression, widely expressed.

The protein resides in the cytoplasm. It localises to the nucleus. It is found in the early endosome. The enzyme catalyses Thiol-dependent hydrolysis of ester, thioester, amide, peptide and isopeptide bonds formed by the C-terminal Gly of ubiquitin (a 76-residue protein attached to proteins as an intracellular targeting signal).. Its activity is regulated as follows. Specifically inhibited by spautin-1 (specific and potent autophagy inhibitor-1), a derivative of MBCQ that binds to USP10 and inhibits deubiquitinase activity. Regulated by PIK3C3/VPS34-containing complexes. Functionally, hydrolase that can remove conjugated ubiquitin from target proteins such as p53/TP53, RPS2/us5, RPS3/us3, RPS10/eS10, BECN1, SNX3 and CFTR. Acts as an essential regulator of p53/TP53 stability: in unstressed cells, specifically deubiquitinates p53/TP53 in the cytoplasm, leading to counteract MDM2 action and stabilize p53/TP53. Following DNA damage, translocates to the nucleus and deubiquitinates p53/TP53, leading to regulate the p53/TP53-dependent DNA damage response. Component of a regulatory loop that controls autophagy and p53/TP53 levels: mediates deubiquitination of BECN1, a key regulator of autophagy, leading to stabilize the PIK3C3/VPS34-containing complexes. In turn, PIK3C3/VPS34-containing complexes regulate USP10 stability, suggesting the existence of a regulatory system by which PIK3C3/VPS34-containing complexes regulate p53/TP53 protein levels via USP10 and USP13. Does not deubiquitinate MDM2. Plays a key role in 40S ribosome subunit recycling when a ribosome has stalled during translation: acts both by inhibiting formation of stress granules, which store stalled translation pre-initiation complexes, and mediating deubiquitination of 40S ribosome subunits. Acts as a negative regulator of stress granules formation by lowering G3BP1 and G3BP2 valence, thereby preventing G3BP1 and G3BP2 ability to undergo liquid-liquid phase separation (LLPS) and assembly of stress granules. Promotes 40S ribosome subunit recycling following ribosome dissociation in response to ribosome stalling by mediating deubiquitination of 40S ribosomal proteins RPS2/us5, RPS3/us3 and RPS10/eS10, thereby preventing their degradation by the proteasome. Part of a ribosome quality control that takes place when ribosomes have stalled during translation initiation (iRQC): USP10 acts by removing monoubiquitination of RPS2/us5 and RPS3/us3, promoting 40S ribosomal subunit recycling. Deubiquitinates CFTR in early endosomes, enhancing its endocytic recycling. Involved in a TANK-dependent negative feedback response to attenuate NF-kappa-B activation via deubiquitinating IKBKG or TRAF6 in response to interleukin-1-beta (IL1B) stimulation or upon DNA damage. Deubiquitinates TBX21 leading to its stabilization. Plays a negative role in the RLR signaling pathway upon RNA virus infection by blocking the RIGI-mediated MAVS activation. Mechanistically, removes the unanchored 'Lys-63'-linked polyubiquitin chains of MAVS to inhibit its aggregation, essential for its activation. This Homo sapiens (Human) protein is Ubiquitin carboxyl-terminal hydrolase 10.